The primary structure comprises 449 residues: Probable glycosyltransferase 5 (449 aa).

Over residues Met1–Arg14 the composition is skewed to basic and acidic residues. The tract at residues Met1–Cys24 is disordered. The Cytoplasmic portion of the chain corresponds to Met1–Asp28. A helical; Signal-anchor for type II membrane protein membrane pass occupies residues Ala29–Pro49. The Lumenal segment spans residues Thr50–Thr449. The segment at Ala74 to Tyr109 is disordered. Residues Asn89, Asn413, and Asn422 are each glycosylated (N-linked (GlcNAc...) asparagine).

It belongs to the glycosyltransferase 34 family.

It localises to the golgi apparatus membrane. In terms of biological role, probable glycosyltransferase that may be involved in the biosynthesis of xyloglucan. This chain is Probable glycosyltransferase 5, found in Oryza sativa subsp. indica (Rice).